Reading from the N-terminus, the 645-residue chain is Transcription termination factor FttA (645 aa).

The tract at residues 10 to 77 (APSNQNIMAT…IIVRIDESVR (68 aa)) is KHa. A KHb region spans residues 78 to 146 (KKEEDARKML…WTLRIRKATT (69 aa)). Residues 187 to 391 (EISLTALGGF…LLIESTYGAK (205 aa)) are metallo-beta-lactamase N-terminus. Positions 250, 252, 254, 255, 337, and 360 each coordinate Zn(2+). The beta-Casp stretch occupies residues 392–586 (EDIQPTRQEV…CRMEKLDGFS (195 aa)). Residues 587–645 (GHSDYNQLTGFVQKLRPKLRRVLVNHGERRKSENLALAVRRMFRIPAHYPQIQESIKLF) are metallo-beta-lactamase C-terminus. A Zn(2+)-binding site is contributed by histidine 612.

Belongs to the metallo-beta-lactamase superfamily. RNA-metabolizing metallo-beta-lactamase-like family. FttA subfamily. In terms of assembly, homodimer. Interacts with RNA polymerase (RNAP), interacts with the Spt4-Spt5 complex. The cofactor is Zn(2+).

Terminates transcription on the whole genome. Termination is linked to FttA-mediated RNA cleavage and does not require NTP hydrolysis. Cleaves endonucleolytically at the RNA exit channel of RNA polymerase (RNAP); the 5'-3' exonuclease activity of this protein degrades the nascent RNA released from RNAP. Functionally, terminates transcription genome-wide in M.maripaludis. Restores wild-type growth to a strain of Methanococcus maripaludis depleted for this gene at 22 degrees Celsius and prevents transcriptional read-through. Transcription termination is most effective in vivo on RNAs with more than one U4-tract in their 3'-ends. Has endonuclease activity after U-rich tracts in transcription termination sequences. The chain is Transcription termination factor FttA from Cenarchaeum symbiosum (strain A).